We begin with the raw amino-acid sequence, 427 residues long: cAMP-dependent protein kinase regulatory subunit (427 aa).

The segment at 38–184 (QFCSNFFIRK…RIKVSISNNF (147 aa)) is dimerization and phosphorylation. Residues 96–145 (TTHMGHPNDHGALHDDDDDPLEDEDDEEFDKFSTEPLPSLPPTNYNRGRR) form a disordered region. Residues 110-124 (DDDDDPLEDEDDEEF) show a composition bias toward acidic residues. Position 147 is a phosphoserine (Ser-147). 3',5'-cyclic AMP is bound by residues 185-300 (LFRN…FLSE), Glu-250, Arg-259, 303-422 (LLKS…YHAV), Glu-372, and Arg-381.

The protein belongs to the cAMP-dependent kinase regulatory chain family. Tetramer, composed of 2 regulatory (R) and 2 catalytic (C) subunits. In the presence of cAMP it dissociates into 2 active monomeric C subunits and an R dimer.

This Mucor circinelloides f. lusitanicus (Mucor racemosus var. lusitanicus) protein is cAMP-dependent protein kinase regulatory subunit (pkar).